The following is a 746-amino-acid chain: MEHTYQYSWIIPFIPLPVPILLGIGLLLFPTVTKSLRRMWTFLSIFLLSIVMIFSVYLSIQQIFLSCIHQNVWSWTINNEFSFEFGYFIDPLTSIMLILITTVGILVLIYSDNYMAHDQGYLRFFAYLGFFTTSMLGLVTSSNLIQVYFFWELVGMCSYLLIGFWFTRPIAANACQKAFVTNRVGDFGLLLGILGLYWITGSFEFQDLFEIVNNLILNNRVNLLFLTLCAFLLFVGPIAKSAQFPLHVWLPDAMEGPTPISALIHAATMVAAGIFLVARLLPLFIVIPSIMYIISLIGIITVLLGATLALAQKDIKRGLAYSTMSQLGYMMLALGMGSYRPALFHLITHAYSKALLFLGSGSIIHSMEAIVGYSPDKSQNMILMGGLTKHVPITKTAFLIGTLSLCGIPPLAWFWSKDEILNDSLLFSPIFAIIACSTAGLTAFYMFRIYLLTFEGHLNTYFINYSGKKSSSFYSISLWGKAEEKKLNRNFELVPLLTMNNTKRVSFFGKKTYKISNNVTNQTFITVENFGLNTRTFYYPQESDNTILFPMLVLLLFTLFVGTIGIPFNQEGLDFDILSKLLTPSINLLHKNSQNFVDWYEFLQNATFSVSIALFGIFIAYCLYKPFYSSLLNLTLLNSFKTWSSKRIRWEKLINLVYNWSYNRGYIDAFFKTSLTENIRRLAKQMNFFDKRIIDGITNGVGITSFFVGEVTKYISGSRISFYLFLYLSYVFIFLMILFFFYFEKF.

The next 16 membrane-spanning stretches (helical) occupy residues 9–29, 40–60, 89–109, 125–145, 147–167, 185–205, 221–241, 258–278, 280–300, 327–347, 354–374, 396–416, 425–445, 547–567, 608–628, and 722–742; these read WIIPFIPLPVPILLGIGLLLF, WTFLSIFLLSIVMIFSVYLSI, IDPLTSIMLILITTVGILVLI, FAYLGFFTTSMLGLVTSSNLI, VYFFWELVGMCSYLLIGFWFT, GDFGLLLGILGLYWITGSFEF, VNLLFLTLCAFLLFVGPIAKS, TPISALIHAATMVAAGIFLVA, LLPLFIVIPSIMYIISLIGII, LGYMMLALGMGSYRPALFHLI, ALLFLGSGSIIHSMEAIVGYS, TAFLIGTLSLCGIPPLAWFWS, LLFSPIFAIIACSTAGLTAFY, ILFPMLVLLLFTLFVGTIGIP, FSVSIALFGIFIAYCLYKPFY, and FYLFLYLSYVFIFLMILFFFY.

The protein belongs to the complex I subunit 5 family. In terms of assembly, NDH is composed of at least 16 different subunits, 5 of which are encoded in the nucleus.

It localises to the plastid. The protein localises to the chloroplast thylakoid membrane. The catalysed reaction is a plastoquinone + NADH + (n+1) H(+)(in) = a plastoquinol + NAD(+) + n H(+)(out). It catalyses the reaction a plastoquinone + NADPH + (n+1) H(+)(in) = a plastoquinol + NADP(+) + n H(+)(out). Functionally, NDH shuttles electrons from NAD(P)H:plastoquinone, via FMN and iron-sulfur (Fe-S) centers, to quinones in the photosynthetic chain and possibly in a chloroplast respiratory chain. The immediate electron acceptor for the enzyme in this species is believed to be plastoquinone. Couples the redox reaction to proton translocation, and thus conserves the redox energy in a proton gradient. The chain is NAD(P)H-quinone oxidoreductase subunit 5, chloroplastic (ndhF) from Draba nemorosa (Woodland whitlowgrass).